Here is a 118-residue protein sequence, read N- to C-terminus: MIITVCKGKIHRAVVTEAELHYEGSLTVDQDLMDMAGMKPYEQVSVVNVNNGARFETYLIVGERGSGTICLNGAAARLGMKGDKVIIITYGQVEEKDLPNDYQPKVVFVDENNRPKKA.

Residue serine 25 is the Schiff-base intermediate with substrate; via pyruvic acid of the active site. A Pyruvic acid (Ser) modification is found at serine 25. Residue threonine 57 coordinates substrate. Tyrosine 58 acts as the Proton donor in catalysis. Position 73–75 (glycine 73–alanine 75) interacts with substrate.

Belongs to the PanD family. In terms of assembly, heterooctamer of four alpha and four beta subunits. Pyruvate is required as a cofactor. Post-translationally, is synthesized initially as an inactive proenzyme, which is activated by self-cleavage at a specific serine bond to produce a beta-subunit with a hydroxyl group at its C-terminus and an alpha-subunit with a pyruvoyl group at its N-terminus.

The protein resides in the cytoplasm. It catalyses the reaction L-aspartate + H(+) = beta-alanine + CO2. It participates in cofactor biosynthesis; (R)-pantothenate biosynthesis; beta-alanine from L-aspartate: step 1/1. In terms of biological role, catalyzes the pyruvoyl-dependent decarboxylation of aspartate to produce beta-alanine. This is Aspartate 1-decarboxylase from Leptospira biflexa serovar Patoc (strain Patoc 1 / Ames).